The primary structure comprises 119 residues: Small ribosomal subunit protein bS6 (119 aa).

The segment at 96-119 (VTEPSPLARSQEKDEEEGGRTAEA) is disordered.

This sequence belongs to the bacterial ribosomal protein bS6 family.

In terms of biological role, binds together with bS18 to 16S ribosomal RNA. The sequence is that of Small ribosomal subunit protein bS6 from Alkalilimnicola ehrlichii (strain ATCC BAA-1101 / DSM 17681 / MLHE-1).